Reading from the N-terminus, the 256-residue chain is 1-(5-phosphoribosyl)-5-[(5-phosphoribosylamino)methylideneamino] imidazole-4-carboxamide isomerase (256 aa).

D9 acts as the Proton acceptor in catalysis. D130 acts as the Proton donor in catalysis.

The protein belongs to the HisA/HisF family.

The protein resides in the cytoplasm. The catalysed reaction is 1-(5-phospho-beta-D-ribosyl)-5-[(5-phospho-beta-D-ribosylamino)methylideneamino]imidazole-4-carboxamide = 5-[(5-phospho-1-deoxy-D-ribulos-1-ylimino)methylamino]-1-(5-phospho-beta-D-ribosyl)imidazole-4-carboxamide. It functions in the pathway amino-acid biosynthesis; L-histidine biosynthesis; L-histidine from 5-phospho-alpha-D-ribose 1-diphosphate: step 4/9. The chain is 1-(5-phosphoribosyl)-5-[(5-phosphoribosylamino)methylideneamino] imidazole-4-carboxamide isomerase from Prochlorococcus marinus (strain SARG / CCMP1375 / SS120).